Reading from the N-terminus, the 207-residue chain is 3-demethoxyubiquinol 3-hydroxylase (207 aa).

Fe cation contacts are provided by glutamate 56, glutamate 86, histidine 89, glutamate 138, glutamate 170, and histidine 173.

The protein belongs to the COQ7 family. It depends on Fe cation as a cofactor.

The protein localises to the cell membrane. The catalysed reaction is a 5-methoxy-2-methyl-3-(all-trans-polyprenyl)benzene-1,4-diol + AH2 + O2 = a 3-demethylubiquinol + A + H2O. It functions in the pathway cofactor biosynthesis; ubiquinone biosynthesis. Its function is as follows. Catalyzes the hydroxylation of 2-nonaprenyl-3-methyl-6-methoxy-1,4-benzoquinol during ubiquinone biosynthesis. This chain is 3-demethoxyubiquinol 3-hydroxylase, found in Cupriavidus necator (strain ATCC 17699 / DSM 428 / KCTC 22496 / NCIMB 10442 / H16 / Stanier 337) (Ralstonia eutropha).